We begin with the raw amino-acid sequence, 205 residues long: Ribonuclease HII (205 aa).

An RNase H type-2 domain is found at 16 to 205 (VSEVGIDEVG…KSFLKKSKLI (190 aa)). The a divalent metal cation site is built by Asp22, Glu23, and Asp118.

The protein belongs to the RNase HII family. It depends on Mn(2+) as a cofactor. The cofactor is Mg(2+).

It localises to the cytoplasm. The enzyme catalyses Endonucleolytic cleavage to 5'-phosphomonoester.. Its function is as follows. Endonuclease that specifically degrades the RNA of RNA-DNA hybrids. The polypeptide is Ribonuclease HII (Prochlorococcus marinus (strain AS9601)).